A 239-amino-acid chain; its full sequence is Norbelladine 4'-O-methyltransferase (239 aa).

Residues valine 55, glutamate 77, 79–80 (GV), serine 85, aspartate 103, and alanine 132 each bind S-adenosyl-L-methionine. An a divalent metal cation-binding site is contributed by aspartate 155. Aspartate 157 contacts S-adenosyl-L-methionine. Positions 181 and 182 each coordinate a divalent metal cation.

This sequence belongs to the class I-like SAM-binding methyltransferase superfamily. Cation-dependent O-methyltransferase family. Requires Mg(2+) as cofactor. Mostly expressed in bulbs, and, to a lower extent, in stems and roots.

It carries out the reaction norbelladine + S-adenosyl-L-methionine = 4'-O-methylnorbelladine + S-adenosyl-L-homocysteine + H(+). It participates in alkaloid biosynthesis. Functionally, 4'-O-methyltransferase converting norbelladine to 4'-O-methylnorbelladine. 4'-O-methylnorbelladine is a precursor to all Amaryllidaceae alkaloids such as galanthamine, lycorine and haemanthamine, and including haemanthamine- and crinamine-type alkaloids, promising anticancer agents. The chain is Norbelladine 4'-O-methyltransferase from Narcissus pseudonarcissus (Daffodil).